The primary structure comprises 1077 residues: Error-prone DNA polymerase (1077 aa).

This sequence belongs to the DNA polymerase type-C family. DnaE2 subfamily.

It is found in the cytoplasm. It carries out the reaction DNA(n) + a 2'-deoxyribonucleoside 5'-triphosphate = DNA(n+1) + diphosphate. DNA polymerase involved in damage-induced mutagenesis and translesion synthesis (TLS). It is not the major replicative DNA polymerase. This chain is Error-prone DNA polymerase, found in Brucella melitensis biotype 1 (strain ATCC 23456 / CCUG 17765 / NCTC 10094 / 16M).